The chain runs to 466 residues: 23S rRNA (uracil(1939)-C(5))-methyltransferase RlmD (466 aa).

A TRAM domain is found at 1–54 (MVDVLNIESLDLEARGIAHRDGKVLFVEGALPGERVTVQTVRRKPSYEIAKVEE). [4Fe-4S] cluster is bound by residues Cys67, Cys73, Cys76, and Cys155. Gln264, Phe293, Asn298, Glu314, Asn342, and Asp363 together coordinate S-adenosyl-L-methionine. Cys393 serves as the catalytic Nucleophile.

The protein belongs to the class I-like SAM-binding methyltransferase superfamily. RNA M5U methyltransferase family. RlmD subfamily.

It carries out the reaction uridine(1939) in 23S rRNA + S-adenosyl-L-methionine = 5-methyluridine(1939) in 23S rRNA + S-adenosyl-L-homocysteine + H(+). Catalyzes the formation of 5-methyl-uridine at position 1939 (m5U1939) in 23S rRNA. This is 23S rRNA (uracil(1939)-C(5))-methyltransferase RlmD from Bordetella pertussis (strain Tohama I / ATCC BAA-589 / NCTC 13251).